A 387-amino-acid chain; its full sequence is Succinate--CoA ligase [ADP-forming] subunit beta (387 aa).

Residues 9-245 (KDLLESYGLK…KSQENAKELK (237 aa)) form the ATP-grasp domain. ATP contacts are provided by residues lysine 46, 53–55 (GRG), glutamate 100, tyrosine 103, and glutamate 108. Mg(2+) is bound by residues asparagine 200 and aspartate 214. Substrate contacts are provided by residues asparagine 265 and 322-324 (GIV).

Belongs to the succinate/malate CoA ligase beta subunit family. In terms of assembly, heterotetramer of two alpha and two beta subunits. The cofactor is Mg(2+).

The catalysed reaction is succinate + ATP + CoA = succinyl-CoA + ADP + phosphate. It catalyses the reaction GTP + succinate + CoA = succinyl-CoA + GDP + phosphate. Its pathway is carbohydrate metabolism; tricarboxylic acid cycle; succinate from succinyl-CoA (ligase route): step 1/1. Functionally, succinyl-CoA synthetase functions in the citric acid cycle (TCA), coupling the hydrolysis of succinyl-CoA to the synthesis of either ATP or GTP and thus represents the only step of substrate-level phosphorylation in the TCA. The beta subunit provides nucleotide specificity of the enzyme and binds the substrate succinate, while the binding sites for coenzyme A and phosphate are found in the alpha subunit. This Francisella tularensis subsp. novicida (strain U112) protein is Succinate--CoA ligase [ADP-forming] subunit beta.